We begin with the raw amino-acid sequence, 307 residues long: Metapyrocatechase (307 aa).

VOC domains follow at residues 7–122 (RPGH…LYAD) and 150–269 (RFDH…VFCG). Fe cation contacts are provided by His-153, His-214, and Glu-265.

The protein belongs to the extradiol ring-cleavage dioxygenase family. As to quaternary structure, homotetramer. Requires Fe(2+) as cofactor.

The catalysed reaction is catechol + O2 = (2Z,4E)-2-hydroxy-6-oxohexa-2,4-dienoate + H(+). The protein operates within aromatic compound metabolism; benzoate degradation via hydroxylation. In Pseudomonas sp. (strain CF600), this protein is Metapyrocatechase (dmpB).